Reading from the N-terminus, the 419-residue chain is Putative zinc metalloprotease M6_Spy1682 (419 aa).

H18 is a Zn(2+) binding site. E19 is an active-site residue. A Zn(2+)-binding site is contributed by H22. A run of 4 helical transmembrane segments spans residues 169-191, 301-323, 343-365, and 392-411; these read LITN…ILLV, LAWS…FSLN, LESV…LIPI, and AYIT…AVTW. The region spanning 175–274 is the PDZ domain; sequence GPMNNFILGI…LKTVAVKPQK (100 aa).

Belongs to the peptidase M50B family. The cofactor is Zn(2+).

The protein localises to the cell membrane. The polypeptide is Putative zinc metalloprotease M6_Spy1682 (Streptococcus pyogenes serotype M6 (strain ATCC BAA-946 / MGAS10394)).